A 595-amino-acid polypeptide reads, in one-letter code: Protein LUTEIN DEFICIENT 5, chloroplastic (595 aa).

The transit peptide at 1 to 28 directs the protein to the chloroplast; the sequence is MAMAFPLSYTPTITVKPVTYSRRSNFVV. Heme is bound at residue Cys516.

Belongs to the cytochrome P450 family. It depends on heme as a cofactor.

The protein resides in the plastid. It is found in the chloroplast. Its function is as follows. Heme-containing cytochrome P450 involved in the biosynthesis of xanthophylls. Specific for beta-ring hydroxylation of alpha- and beta-carotene. Also has a low activity toward the epsilon-rings of alpha-carotene. The beta-ring of alpha-carotene is the preferred substrate in planta. This chain is Protein LUTEIN DEFICIENT 5, chloroplastic (CYP97A3), found in Arabidopsis thaliana (Mouse-ear cress).